Consider the following 387-residue polypeptide: Succinate--CoA ligase [ADP-forming] subunit beta (387 aa).

The ATP-grasp domain occupies 9 to 245 (KDLLESYGLK…KSQENAKELK (237 aa)). Residues Lys-46, 53 to 55 (GRG), Glu-100, Tyr-103, and Glu-108 contribute to the ATP site. The Mg(2+) site is built by Asn-200 and Asp-214. Substrate-binding positions include Asn-265 and 322–324 (GIV).

Belongs to the succinate/malate CoA ligase beta subunit family. Heterotetramer of two alpha and two beta subunits. The cofactor is Mg(2+).

The catalysed reaction is succinate + ATP + CoA = succinyl-CoA + ADP + phosphate. It carries out the reaction GTP + succinate + CoA = succinyl-CoA + GDP + phosphate. Its pathway is carbohydrate metabolism; tricarboxylic acid cycle; succinate from succinyl-CoA (ligase route): step 1/1. Its function is as follows. Succinyl-CoA synthetase functions in the citric acid cycle (TCA), coupling the hydrolysis of succinyl-CoA to the synthesis of either ATP or GTP and thus represents the only step of substrate-level phosphorylation in the TCA. The beta subunit provides nucleotide specificity of the enzyme and binds the substrate succinate, while the binding sites for coenzyme A and phosphate are found in the alpha subunit. In Francisella tularensis subsp. holarctica (strain OSU18), this protein is Succinate--CoA ligase [ADP-forming] subunit beta.